The following is a 368-amino-acid chain: UDP-N-acetylglucosamine--N-acetylmuramyl-(pentapeptide) pyrophosphoryl-undecaprenol N-acetylglucosamine transferase (368 aa).

Residues 10-12 (TGG), N128, R170, S199, I250, and Q295 each bind UDP-N-acetyl-alpha-D-glucosamine.

The protein belongs to the glycosyltransferase 28 family. MurG subfamily.

It localises to the cell inner membrane. It carries out the reaction di-trans,octa-cis-undecaprenyl diphospho-N-acetyl-alpha-D-muramoyl-L-alanyl-D-glutamyl-meso-2,6-diaminopimeloyl-D-alanyl-D-alanine + UDP-N-acetyl-alpha-D-glucosamine = di-trans,octa-cis-undecaprenyl diphospho-[N-acetyl-alpha-D-glucosaminyl-(1-&gt;4)]-N-acetyl-alpha-D-muramoyl-L-alanyl-D-glutamyl-meso-2,6-diaminopimeloyl-D-alanyl-D-alanine + UDP + H(+). The protein operates within cell wall biogenesis; peptidoglycan biosynthesis. Cell wall formation. Catalyzes the transfer of a GlcNAc subunit on undecaprenyl-pyrophosphoryl-MurNAc-pentapeptide (lipid intermediate I) to form undecaprenyl-pyrophosphoryl-MurNAc-(pentapeptide)GlcNAc (lipid intermediate II). The polypeptide is UDP-N-acetylglucosamine--N-acetylmuramyl-(pentapeptide) pyrophosphoryl-undecaprenol N-acetylglucosamine transferase (Chlorobium phaeovibrioides (strain DSM 265 / 1930) (Prosthecochloris vibrioformis (strain DSM 265))).